A 312-amino-acid chain; its full sequence is Bifunctional pinoresinol-lariciresinol reductase (312 aa).

NADP(+) is bound by residues Gly-10 to Gly-16, Arg-35, and Lys-44. The active-site Proton acceptor is the Lys-139. Arg-143 is a binding site for NADP(+). His-271 provides a ligand contact to substrate.

This sequence belongs to the NmrA-type oxidoreductase family. Isoflavone reductase subfamily. Dimer. In terms of tissue distribution, expressed in young stems, young roots and petioles. In stems, expressed in radial parenchyma cells and in the cambial cells of developing secondary xylem.

It carries out the reaction (+)-lariciresinol + NADP(+) = (+)-pinoresinol + NADPH + H(+). The enzyme catalyses (-)-secoisolariciresinol + NADP(+) = (+)-lariciresinol + NADPH + H(+). Its function is as follows. Reductase involved in lignan biosynthesis. Catalyzes the enantioselective sequential conversion of (+)-pinoresinol into (+)-lariciresinol and of (+)-lariciresinol into (-)-secoisolariciresinol. Abstracts the 4R-hydride from the NADPH cofactor during catalysis. This Forsythia intermedia (Border forsythia) protein is Bifunctional pinoresinol-lariciresinol reductase (PLR_Fi1).